Consider the following 760-residue polypeptide: Leucine-rich repeat extensin-like protein 3 (760 aa).

The N-terminal stretch at 1–20 is a signal peptide; that stretch reads MKKTIQILLFFFFLINLTNA. Residue Asn-16 is glycosylated (N-linked (GlcNAc...) asparagine). The LRR 1 repeat unit spans residues 21-45; sequence LSISSDGGVLSDNEVRHIQRRQLLE. N-linked (GlcNAc...) asparagine glycans are attached at residues Asn-86 and Asn-98. LRR repeat units follow at residues 113-137, 138-160, 161-185, 186-209, 211-232, 234-255, 256-279, 281-303, and 304-327; these read IRTVAGIDLNHADIAGYLPEELGLL, SDLALFHVNSNRFCGTVPHRFNR, LKLLFELDLSNNRFAGKFPTVVLQL, PSLKFLDLRFNEFEGTVPKELFSK, LDAIFINHNRFRFELPENFGDS, VSVIVLANNRFHGCVPSSLVEM, KNLNEIIFMNNGLNSCLPSDIGRL, NVTVFDVSFNELVGPLPESVGEM, and VSVEQLNVAHNMLSGKIPASICQL. N-linked (GlcNAc...) asparagine glycosylation occurs at Asn-281. Asn-332 is a glycosylation site (N-linked (GlcNAc...) asparagine). Disordered stretches follow at residues 389–502, 515–610, and 663–748; these read GRSV…PPPP, PPVY…YSPP, and PPPP…PVIG. Pro residues-rich tracts occupy residues 394-415 and 423-502; these read PRPPVVTPLPPPSLPSPPPPAP and LTSP…PPPP. The tract at residues 409–758 is contains the Ser-Pro(4) repeats; the sequence is SPPPPAPIFS…VSYASPPPPP (350 aa). Residues 663–745 are compositionally biased toward pro residues; the sequence is PPPPVHYSSP…SPEYEGPLPP (83 aa).

Interacts with SH3P1. In terms of processing, hydroxylated on proline residues in the S-P-P-P-P repeat. O-glycosylated on hydroxyprolines. As to expression, expressed in roots, stems, leaves and flowers, mostly in vascular tissues.

Its subcellular location is the secreted. The protein localises to the cell wall. Modulates cell morphogenesis by regulating cell wall formation and assembly, and/or growth polarization. In Arabidopsis thaliana (Mouse-ear cress), this protein is Leucine-rich repeat extensin-like protein 3 (LRX3).